We begin with the raw amino-acid sequence, 157 residues long: Cell number regulator 10 (157 aa).

The next 2 membrane-spanning stretches (helical) occupy residues 41-57 (DCGL…ITFG) and 66-83 (GATS…LAYF).

This sequence belongs to the cornifelin family. Expressed in roots, leaves, stalks, immature ears and silks.

The protein localises to the membrane. This Zea mays (Maize) protein is Cell number regulator 10 (CNR10).